A 491-amino-acid chain; its full sequence is 3-octaprenyl-4-hydroxybenzoate carboxy-lyase (491 aa).

A Mn(2+)-binding site is contributed by Asn172. Residues 175–177 (IYR), 189–191 (RWL), and 194–195 (RG) contribute to the prenylated FMN site. Glu238 is a Mn(2+) binding site. Asp287 functions as the Proton donor in the catalytic mechanism.

The protein belongs to the UbiD family. As to quaternary structure, homohexamer. The cofactor is prenylated FMN. It depends on Mn(2+) as a cofactor.

It localises to the cell membrane. The catalysed reaction is a 4-hydroxy-3-(all-trans-polyprenyl)benzoate + H(+) = a 2-(all-trans-polyprenyl)phenol + CO2. It functions in the pathway cofactor biosynthesis; ubiquinone biosynthesis. Its function is as follows. Catalyzes the decarboxylation of 3-octaprenyl-4-hydroxy benzoate to 2-octaprenylphenol, an intermediate step in ubiquinone biosynthesis. The sequence is that of 3-octaprenyl-4-hydroxybenzoate carboxy-lyase from Alcanivorax borkumensis (strain ATCC 700651 / DSM 11573 / NCIMB 13689 / SK2).